The sequence spans 208 residues: ER membrane protein complex subunit 8/9 homolog (208 aa).

An MPN domain is found at 11 to 146 (YEISQNAYIK…ERSPVMQLCV (136 aa)).

Belongs to the EMC8/EMC9 family.

This Arabidopsis thaliana (Mouse-ear cress) protein is ER membrane protein complex subunit 8/9 homolog (EMB2731).